The sequence spans 101 residues: Integration host factor subunit beta (101 aa).

Residues Pro57 to Ser76 form a disordered region.

It belongs to the bacterial histone-like protein family. Heterodimer of an alpha and a beta chain.

In terms of biological role, this protein is one of the two subunits of integration host factor, a specific DNA-binding protein that functions in genetic recombination as well as in transcriptional and translational control. The sequence is that of Integration host factor subunit beta from Nitrobacter winogradskyi (strain ATCC 25391 / DSM 10237 / CIP 104748 / NCIMB 11846 / Nb-255).